Reading from the N-terminus, the 255-residue chain is Type III pantothenate kinase (255 aa).

6–13 (DVGNSYTM) contributes to the ATP binding site. 107–110 (GADR) contributes to the substrate binding site. The active-site Proton acceptor is D109. D129 provides a ligand contact to K(+). T132 contacts ATP. Residue T183 participates in substrate binding.

Belongs to the type III pantothenate kinase family. Homodimer. The cofactor is NH4(+). It depends on K(+) as a cofactor.

The protein localises to the cytoplasm. The enzyme catalyses (R)-pantothenate + ATP = (R)-4'-phosphopantothenate + ADP + H(+). The protein operates within cofactor biosynthesis; coenzyme A biosynthesis; CoA from (R)-pantothenate: step 1/5. Its function is as follows. Catalyzes the phosphorylation of pantothenate (Pan), the first step in CoA biosynthesis. This chain is Type III pantothenate kinase, found in Petrotoga mobilis (strain DSM 10674 / SJ95).